We begin with the raw amino-acid sequence, 350 residues long: MIEADRIVTASSRDRDEQLDRAIRPLKLAEYIGQPVVREQMDLFIRAAKGRQEALDHTLIFGPPGLGKTTLANIIAEEMGVSIKSTSGPVLERPGDLAALLTNLEAGDVLFVDEIHRLSPIVEEVLYPAMEDFQLDIMIGEGPAARSIKLDLPPFTLVGATTRAGMLTNPLRDRFGIVQRLEFYSTEDLATIVRRSAGILGLPTEPEGAFEIARRARGTPRIANRLLRRVRDFAQVRGKGEITRQIADLALNMLDVDERGFDHQDRRLLLTLIEKFDGGPVGIDSLAAAISEERHTIEDVLEPYLIQQGYIMRTPRGRVVTRHAYLHFGLNLPKRMNEPPTPDLFEGDIV.

The large ATPase domain (RuvB-L) stretch occupies residues 4–184; it reads ADRIVTASSR…FGIVQRLEFY (181 aa). Residues isoleucine 23, arginine 24, glycine 65, lysine 68, threonine 69, threonine 70, 131-133, arginine 174, tyrosine 184, and arginine 221 contribute to the ATP site; that span reads EDF. Threonine 69 serves as a coordination point for Mg(2+). Residues 185–255 are small ATPAse domain (RuvB-S); the sequence is STEDLATIVR…IADLALNMLD (71 aa). The segment at 258–350 is head domain (RuvB-H); that stretch reads ERGFDHQDRR…TPDLFEGDIV (93 aa). The DNA site is built by arginine 294, arginine 313, and arginine 318.

This sequence belongs to the RuvB family. Homohexamer. Forms an RuvA(8)-RuvB(12)-Holliday junction (HJ) complex. HJ DNA is sandwiched between 2 RuvA tetramers; dsDNA enters through RuvA and exits via RuvB. An RuvB hexamer assembles on each DNA strand where it exits the tetramer. Each RuvB hexamer is contacted by two RuvA subunits (via domain III) on 2 adjacent RuvB subunits; this complex drives branch migration. In the full resolvosome a probable DNA-RuvA(4)-RuvB(12)-RuvC(2) complex forms which resolves the HJ.

It localises to the cytoplasm. It carries out the reaction ATP + H2O = ADP + phosphate + H(+). Functionally, the RuvA-RuvB-RuvC complex processes Holliday junction (HJ) DNA during genetic recombination and DNA repair, while the RuvA-RuvB complex plays an important role in the rescue of blocked DNA replication forks via replication fork reversal (RFR). RuvA specifically binds to HJ cruciform DNA, conferring on it an open structure. The RuvB hexamer acts as an ATP-dependent pump, pulling dsDNA into and through the RuvAB complex. RuvB forms 2 homohexamers on either side of HJ DNA bound by 1 or 2 RuvA tetramers; 4 subunits per hexamer contact DNA at a time. Coordinated motions by a converter formed by DNA-disengaged RuvB subunits stimulates ATP hydrolysis and nucleotide exchange. Immobilization of the converter enables RuvB to convert the ATP-contained energy into a lever motion, pulling 2 nucleotides of DNA out of the RuvA tetramer per ATP hydrolyzed, thus driving DNA branch migration. The RuvB motors rotate together with the DNA substrate, which together with the progressing nucleotide cycle form the mechanistic basis for DNA recombination by continuous HJ branch migration. Branch migration allows RuvC to scan DNA until it finds its consensus sequence, where it cleaves and resolves cruciform DNA. The chain is Holliday junction branch migration complex subunit RuvB from Stutzerimonas stutzeri (strain A1501) (Pseudomonas stutzeri).